A 186-amino-acid polypeptide reads, in one-letter code: Ribosome-recycling factor (186 aa).

This sequence belongs to the RRF family.

Its subcellular location is the cytoplasm. Responsible for the release of ribosomes from messenger RNA at the termination of protein biosynthesis. May increase the efficiency of translation by recycling ribosomes from one round of translation to another. This Rickettsia typhi (strain ATCC VR-144 / Wilmington) protein is Ribosome-recycling factor.